The chain runs to 151 residues: Probable cGMP 3',5'-cyclic phosphodiesterase subunit delta (151 aa).

Belongs to the PDE6D/unc-119 family. In terms of assembly, interacts with Pde6.

It is found in the nucleus. The protein localises to the cytoplasm. The polypeptide is Probable cGMP 3',5'-cyclic phosphodiesterase subunit delta (Drosophila sechellia (Fruit fly)).